The following is a 367-amino-acid chain: Peptide chain release factor 2 (367 aa).

Position 254 is an N5-methylglutamine (Gln254).

It belongs to the prokaryotic/mitochondrial release factor family. In terms of processing, methylated by PrmC. Methylation increases the termination efficiency of RF2.

It localises to the cytoplasm. In terms of biological role, peptide chain release factor 2 directs the termination of translation in response to the peptide chain termination codons UGA and UAA. The protein is Peptide chain release factor 2 of Acidovorax ebreus (strain TPSY) (Diaphorobacter sp. (strain TPSY)).